Consider the following 354-residue polypeptide: Rhodopsin (354 aa).

Topologically, residues Met1–Ala36 are extracellular. N-linked (GlcNAc...) asparagine glycosylation is found at Asn2 and Asn15. A helical membrane pass occupies residues Phe37–Val61. Over Thr62–Asn73 the chain is Cytoplasmic. The chain crosses the membrane as a helical span at residues Tyr74–Tyr96. Residues Thr97–Cys110 lie on the Extracellular side of the membrane. A disulfide bond links Cys110 and Cys187. Residues Asn111–Val133 traverse the membrane as a helical segment. A 'Ionic lock' involved in activated form stabilization motif is present at residues Glu134–Trp136. Over Glu134 to His152 the chain is Cytoplasmic. Residues Ala153 to Phe173 traverse the membrane as a helical segment. The Extracellular segment spans residues Gly174–Ser202. A helical transmembrane segment spans residues Phe203–Gly224. The Cytoplasmic portion of the chain corresponds to Arg225–Arg252. A helical membrane pass occupies residues Met253–Phe274. Residues Ile275–Val286 are Extracellular-facing. The chain crosses the membrane as a helical span at residues Phe287–Cys308. Lys296 carries the N6-(retinylidene)lysine modification. At Met309–Ala354 the chain is on the cytoplasmic side. Residues Cys322 and Cys323 are each lipidated (S-palmitoyl cysteine). Residues Gly333–Ala354 form a disordered region. A compositionally biased stretch (low complexity) spans Ala334–Ala354.

The protein belongs to the G-protein coupled receptor 1 family. Opsin subfamily. Phosphorylated on some or all of the serine and threonine residues present in the C-terminal region. In terms of processing, contains one covalently linked retinal chromophore.

The protein localises to the membrane. It localises to the cell projection. The protein resides in the cilium. Its subcellular location is the photoreceptor outer segment. In terms of biological role, photoreceptor required for image-forming vision at low light intensity. While most salt water fish species use retinal as chromophore, most freshwater fish use 3-dehydroretinal, or a mixture of retinal and 3-dehydroretinal. Light-induced isomerization of 11-cis to all-trans retinal triggers a conformational change that activates signaling via G-proteins. Subsequent receptor phosphorylation mediates displacement of the bound G-protein alpha subunit by arrestin and terminates signaling. The sequence is that of Rhodopsin (rho) from Zeus faber (John Dory).